Here is a 165-residue protein sequence, read N- to C-terminus: Crossover junction endodeoxyribonuclease RuvC (165 aa).

Residues Asp-7, Glu-67, and Asp-140 contribute to the active site. The Mg(2+) site is built by Asp-7, Glu-67, and Asp-140.

Belongs to the RuvC family. As to quaternary structure, homodimer which binds Holliday junction (HJ) DNA. The HJ becomes 2-fold symmetrical on binding to RuvC with unstacked arms; it has a different conformation from HJ DNA in complex with RuvA. In the full resolvosome a probable DNA-RuvA(4)-RuvB(12)-RuvC(2) complex forms which resolves the HJ. Mg(2+) serves as cofactor.

The protein localises to the cytoplasm. It catalyses the reaction Endonucleolytic cleavage at a junction such as a reciprocal single-stranded crossover between two homologous DNA duplexes (Holliday junction).. In terms of biological role, the RuvA-RuvB-RuvC complex processes Holliday junction (HJ) DNA during genetic recombination and DNA repair. Endonuclease that resolves HJ intermediates. Cleaves cruciform DNA by making single-stranded nicks across the HJ at symmetrical positions within the homologous arms, yielding a 5'-phosphate and a 3'-hydroxyl group; requires a central core of homology in the junction. The consensus cleavage sequence is 5'-(A/T)TT(C/G)-3'. Cleavage occurs on the 3'-side of the TT dinucleotide at the point of strand exchange. HJ branch migration catalyzed by RuvA-RuvB allows RuvC to scan DNA until it finds its consensus sequence, where it cleaves and resolves the cruciform DNA. The protein is Crossover junction endodeoxyribonuclease RuvC of Halothermothrix orenii (strain H 168 / OCM 544 / DSM 9562).